A 156-amino-acid polypeptide reads, in one-letter code: Transcription elongation factor GreA (156 aa).

Positions 46–67 (AEYHAAREKQSFIEGRIKELEA) form a coiled coil.

The protein belongs to the GreA/GreB family.

Its function is as follows. Necessary for efficient RNA polymerase transcription elongation past template-encoded arresting sites. The arresting sites in DNA have the property of trapping a certain fraction of elongating RNA polymerases that pass through, resulting in locked ternary complexes. Cleavage of the nascent transcript by cleavage factors such as GreA or GreB allows the resumption of elongation from the new 3'terminus. GreA releases sequences of 2 to 3 nucleotides. This Cereibacter sphaeroides (strain ATCC 17029 / ATH 2.4.9) (Rhodobacter sphaeroides) protein is Transcription elongation factor GreA.